The chain runs to 409 residues: Elongation factor Tu, chloroplastic (409 aa).

The 205-residue stretch at 10 to 214 (KQHVNIGTIG…NVDTYIPTPV (205 aa)) folds into the tr-type G domain. The segment at 19–26 (GHVDHGKT) is G1. 19 to 26 (GHVDHGKT) is a binding site for GTP. Thr26 provides a ligand contact to Mg(2+). Positions 60 to 64 (GITIN) are G2. The G3 stretch occupies residues 81 to 84 (DCPG). Residues 81–85 (DCPGH) and 136–139 (NKED) each bind GTP. Residues 136 to 139 (NKED) are G4. The segment at 174–176 (SAL) is G5.

It belongs to the TRAFAC class translation factor GTPase superfamily. Classic translation factor GTPase family. EF-Tu/EF-1A subfamily.

The protein localises to the plastid. The protein resides in the chloroplast. It carries out the reaction GTP + H2O = GDP + phosphate + H(+). In terms of biological role, GTP hydrolase that promotes the GTP-dependent binding of aminoacyl-tRNA to the A-site of ribosomes during protein biosynthesis. The sequence is that of Elongation factor Tu, chloroplastic (tufA) from Tupiella akineta (Green alga).